The sequence spans 403 residues: Cystinosin homolog (403 aa).

The Lumenal portion of the chain corresponds to 1–122 (MKLPVSILFF…YSRITVIRSH (122 aa)). N45, N52, N78, and N96 each carry an N-linked (GlcNAc...) asparagine glycan. The chain crosses the membrane as a helical span at residues 123 to 143 (WLAILIQIVGWTYFAAWSVSF). The region spanning 124–190 (LAILIQIVGW…MYYNSHVKNI (67 aa)) is the PQ-loop 1 domain. Topologically, residues 144–162 (YPQMYLNFKRKSVVGLNFD) are cytoplasmic. Residues 163-183 (FLSLNLVGFGAYAMFNLLMYY) traverse the membrane as a helical segment. Topologically, residues 184–206 (NSHVKNIYSMENPRSPPPVLLND) are lumenal. The helical transmembrane segment at 207–227 (VVFAVHAFLACFVTILQCIFY) threads the bilayer. The Cytoplasmic portion of the chain corresponds to 228 to 237 (ERDQQRISTK). A helical transmembrane segment spans residues 238–258 (CIILIIGLVSFGFVSVVVTVL). At 259–260 (NK) the chain is on the lumenal side. Residues 261–283 (ITILDFVVSLSYIKMAVTCCKYF) traverse the membrane as a helical segment. Positions 266–326 (FVVSLSYIKM…MVLQAINVND (61 aa)) constitute a PQ-loop 2 domain. Residues 284 to 294 (PQAYFNYQRKS) lie on the Cytoplasmic side of the membrane. A helical membrane pass occupies residues 295–315 (TVGWSIGNILLDFTGGSLDIL). The Lumenal portion of the chain corresponds to 316 to 336 (QMVLQAINVNDWSAFYANPVK). A helical transmembrane segment spans residues 337–357 (FGLGFVSIFFDIIFMIQHYAL). The Cytoplasmic segment spans residues 358–403 (YPDAEVPHNEYHGVDNPDPDSIVRDAEHGAADNESMESTDPIIVHD). Residues 374-388 (PDPDSIVRDAEHGAA) are compositionally biased toward basic and acidic residues. A disordered region spans residues 374–403 (PDPDSIVRDAEHGAADNESMESTDPIIVHD).

It belongs to the cystinosin family.

It is found in the lysosome membrane. Its subcellular location is the cytoplasmic vesicle. The protein localises to the phagosome. The catalysed reaction is L-cystine(out) + H(+)(out) = L-cystine(in) + H(+)(in). Functionally, cystine/H(+) symporter that mediates export of cystine, the oxidized dimer of cysteine, from lysosomes. May play a role in the degradation of engulfed apoptotic cells. This Caenorhabditis briggsae protein is Cystinosin homolog (ctns-1).